The primary structure comprises 147 residues: uncharacterized protein (147 aa).

The chain crosses the membrane as a helical span at residues 71–91 (IDILAFVAGTVGVGSLVLLQF).

It localises to the virion. It is found in the host membrane. This is an uncharacterized protein from Acanthamoeba polyphaga mimivirus (APMV).